The chain runs to 319 residues: N-acetyllactosaminide alpha-1,3-galactosyltransferase-like 1 (319 aa).

At 1–6 (MQYKKE) the chain is on the cytoplasmic side. A helical; Signal-anchor for type II membrane protein membrane pass occupies residues 7-26 (ALLLMLFAVLLALTQRFSYS). Residues 27-319 (RTKDHLQKMY…IKHIKIAWKP (293 aa)) lie on the Lumenal side of the membrane. Asn89 and Asn101 each carry an N-linked (GlcNAc...) asparagine glycan. Residues 97-102 (FATGNF), 188-190 (AVN), and 210-213 (HAWW) each bind substrate. The active-site Nucleophile is the Glu278.

This sequence belongs to the glycosyltransferase 6 family. Mn(2+) is required as a cofactor.

The protein resides in the golgi apparatus. It is found in the golgi stack membrane. It catalyses the reaction a beta-D-galactosyl-(1-&gt;4)-N-acetyl-beta-D-glucosaminyl derivative + UDP-alpha-D-galactose = an alpha-D-galactosyl-(1-&gt;3)-beta-D-galactosyl-(1-&gt;4)-N-acetyl-beta-D-glucosaminyl derivative + UDP + H(+). Its pathway is protein modification; protein glycosylation. In terms of biological role, synthesizes the galactose-alpha(1,3)-galactose group by catalyzing the transfer of a galactose residue, with an alpha-1,3 linkage, on terminal lactosaminide (Gal-beta-1,4-GlcNAc-R) disaccharide borne by a glycoprotein or a glycolipid. In Mus musculus (Mouse), this protein is N-acetyllactosaminide alpha-1,3-galactosyltransferase-like 1 (Ggta1l1).